A 152-amino-acid polypeptide reads, in one-letter code: Transcriptional regulator MraZ (152 aa).

SpoVT-AbrB domains lie at 5–52 (ATLV…PLPE) and 81–124 (ASEC…DETT).

Belongs to the MraZ family. Forms oligomers.

It localises to the cytoplasm. The protein resides in the nucleoid. In terms of biological role, negatively regulates its own expression and that of the subsequent genes in the proximal part of the division and cell wall (dcw) gene cluster. Acts by binding directly to DNA. May also regulate the expression of genes outside the dcw cluster. This chain is Transcriptional regulator MraZ, found in Shigella dysenteriae serotype 1 (strain Sd197).